The primary structure comprises 784 residues: Receptor-like protein 38 (784 aa).

The signal sequence occupies residues 1-30; the sequence is MIRSQSYCFLGITITIYFFFCLLPLPNTFA. Residues 31-752 are Extracellular-facing; it reads SPPTQSLCRH…SELEEPVLNW (722 aa). LRR repeat units lie at residues 109-133, 134-157, 158-180, 182-204, and 205-227; these read LQHLTHLDLSNCNLQGEIPSSIENL, SHLTHLDLSTNHLVGEVPASIGNL, NQLEYIDLRGNHLRGNIPTSFAN, TKLSLLDLHENNFTGGDIVLSNL, and TSLAILDLSSNHFKSFFSADLSG. A glycan (N-linked (GlcNAc...) asparagine) is linked at Asn-132. Residues Asn-180, Asn-193, and Asn-203 are each glycosylated (N-linked (GlcNAc...) asparagine). The stretch at 228-251 is one LRR 6; degenerate repeat; sequence LHNLEQIFGNENSFVGLFPASLLK. LRR repeat units lie at residues 252–276, 278–301, 302–324, 326–349, 351–373, 374–400, 402–422, 423–446, 447–470, and 472–496; these read ISSLDKIQLSQNQFEGPIDFGNTSS, SRLTMLDISHNNFIGRVPSSLSKL, VNLELLDLSHNNFRGLSPRSISK, VNLTSLDISYNKLEGQVPYFIWKP, NLQSVDLSHNSFFDLGKSVEVVN, GAKLVGLNLGSNSLQGPIPQWICNFRF, FFLDLSDNRFTGSIPQCLKNS, TDFNTLNLRNNSLSGFLPELCMDS, TMLRSLDVSYNNFVGKLPKSLMNC, and DMEFLNVRGNKIKDTFPFWLGSRKS. N-linked (GlcNAc...) asparagine glycosylation occurs at Asn-273. N-linked (GlcNAc...) asparagine glycosylation occurs at Asn-327. Asn-421 and Asn-432 each carry an N-linked (GlcNAc...) asparagine glycan. The stretch at 497–518 is one LRR 17; degenerate repeat; it reads LMVLVLRSNAFYGPVYNSTTYL. N-linked (GlcNAc...) asparagine glycans are attached at residues Asn-513, Asn-544, and Asn-562. Residues 520–544 form an LRR 18 repeat; it reads FPRLSIIDISNNDFVGSLPQDYFAN. LRR repeat units lie at residues 608-632, 633-656, 657-680, and 682-705; these read FRGFKVIDFSGNRFSGHIPRSIGLL, SELLHLNLSGNAFTGNIPPSLANI, TNLETLDLSRNNLSGEIPRSLGNL, and FLSNINFSHNHLQGFVPRSTQFGT. N-linked (GlcNAc...) asparagine glycosylation is found at Asn-639, Asn-655, Asn-668, Asn-679, Asn-687, and Asn-707. Residues 753–773 form a helical membrane-spanning segment; the sequence is IAAAIAFGPGVFCGFVIGHIF. Residues 774–784 are Cytoplasmic-facing; it reads TSYKHLWFIAR.

This sequence belongs to the RLP family.

It localises to the cell membrane. The polypeptide is Receptor-like protein 38 (Arabidopsis thaliana (Mouse-ear cress)).